Here is a 172-residue protein sequence, read N- to C-terminus: UBA-like domain-containing protein 2 (172 aa).

Positions 118-130 (PPNQQPVWLPPSS) are enriched in pro residues. The tract at residues 118-172 (PPNQQPVWLPPSSPTGHHTLHHHHHHMHPPPSWPPVSQPANGPQTPVISALHGQR) is disordered. The segment covering 135–145 (HTLHHHHHHMH) has biased composition (basic residues).

Belongs to the UBALD family.

In Danio rerio (Zebrafish), this protein is UBA-like domain-containing protein 2 (ubald2).